Consider the following 418-residue polypeptide: Putative competence-damage inducible protein (418 aa).

It belongs to the CinA family.

This Streptococcus pneumoniae (strain JJA) protein is Putative competence-damage inducible protein.